A 587-amino-acid polypeptide reads, in one-letter code: MMGENSSAYTTLADNQLYNQFSPSRRKADLIASTSATSSPNLRKSPNRGFSSPRAQQKPITIFDQIVSWFHSEIDVRKKLASFVCGAAVALSFIVTVSILKLSIWAPFSSVQDSLTWWLYPTSWPVTLFIWLSSVAWTFLIIHQFCTVTQVPRIPITDTYAWAGAALEFVHRLIFVYTAFTVSESSFFEDFAWIAIAFSVAISSALVIFRSDFHLNFSNVQVNSFKTLIDFAKSLPYGSLAETSGVDAAIAYTAAMALTVFGSPLLWGFSAWWLLINIQFHLVLFGVCFAQQFFAKIFMKIVNQIVMKPMKFPFPPPYTVHSPTPDQIRTLPNVIETDDPLLKMFALHDLRTVAWEDEKRRVDVFSLSQPGKHPRNWKAVSMPCTRMLDELCSRMTVSAARLVGYSWDDHDVENEEVPRDALMMPRKMREMTYRGAGQSRQQKTIAPIRSNNTQTVGFLAKITRNLGLGKTERLVISRFDAQQNAYAAEAVYMLVVDSMGEDRFGVVQKDLKDLITLLCKLIAAIDTYERAKASVADKSDVTYLRLVDASLKSCLQRVVTTFGSHLRSLELADEHIRTIKLVCAEEI.

The Cytoplasmic portion of the chain corresponds to 1-79 (MMGENSSAYT…FHSEIDVRKK (79 aa)). A disordered region spans residues 32 to 55 (ASTSATSSPNLRKSPNRGFSSPRA). A helical membrane pass occupies residues 80–100 (LASFVCGAAVALSFIVTVSIL). Residues 101-121 (KLSIWAPFSSVQDSLTWWLYP) lie on the Perinuclear space side of the membrane. The helical transmembrane segment at 122–142 (TSWPVTLFIWLSSVAWTFLII) threads the bilayer. The Cytoplasmic portion of the chain corresponds to 143-161 (HQFCTVTQVPRIPITDTYA). Residues 162–182 (WAGAALEFVHRLIFVYTAFTV) traverse the membrane as a helical segment. Over 183–187 (SESSF) the chain is Perinuclear space. The helical transmembrane segment at 188-208 (FEDFAWIAIAFSVAISSALVI) threads the bilayer. The Cytoplasmic segment spans residues 209–255 (FRSDFHLNFSNVQVNSFKTLIDFAKSLPYGSLAETSGVDAAIAYTAA). A helical membrane pass occupies residues 256–276 (MALTVFGSPLLWGFSAWWLLI). Residues 277-281 (NIQFH) are Perinuclear space-facing. The helical transmembrane segment at 282–302 (LVLFGVCFAQQFFAKIFMKIV) threads the bilayer. Residues 303–587 (NQIVMKPMKF…TIKLVCAEEI (285 aa)) are Cytoplasmic-facing.

Belongs to the NDC1 family.

It localises to the nucleus. The protein resides in the nuclear pore complex. Its subcellular location is the nucleus membrane. In terms of biological role, component of the nuclear pore complex (NPC), which plays a key role in de novo assembly and insertion of NPC in the nuclear envelope. The polypeptide is Nucleoporin ndc-1 (npp-22) (Caenorhabditis briggsae).